We begin with the raw amino-acid sequence, 376 residues long: tRNA-specific 2-thiouridylase MnmA (376 aa).

ATP-binding positions include 14 to 21 and methionine 40; that span reads GMSGGVDS. The interaction with target base in tRNA stretch occupies residues 100 to 102; it reads NPD. The active-site Nucleophile is the cysteine 105. Residues cysteine 105 and cysteine 202 are joined by a disulfide bond. Glycine 129 provides a ligand contact to ATP. The interaction with tRNA stretch occupies residues 152–154; the sequence is KDQ. The active-site Cysteine persulfide intermediate is cysteine 202. Residues 315–316 are interaction with tRNA; sequence RY.

Belongs to the MnmA/TRMU family.

Its subcellular location is the cytoplasm. It carries out the reaction S-sulfanyl-L-cysteinyl-[protein] + uridine(34) in tRNA + AH2 + ATP = 2-thiouridine(34) in tRNA + L-cysteinyl-[protein] + A + AMP + diphosphate + H(+). Catalyzes the 2-thiolation of uridine at the wobble position (U34) of tRNA, leading to the formation of s(2)U34. This chain is tRNA-specific 2-thiouridylase MnmA, found in Lactococcus lactis subsp. cremoris (strain SK11).